The following is a 692-amino-acid chain: UvrABC system protein B (692 aa).

Residues 32–418 (DNIENGEKAQ…QTDTIVEQII (387 aa)) form the Helicase ATP-binding domain. ATP is bound at residue 45–52 (GATGTGKT). A Beta-hairpin motif is present at residues 98-121 (YYDYYQPEAYVPSSDTYIEKDSSV). Positions 436-631 (QIDDLVGEIH…TIKKEIRDLI (196 aa)) constitute a Helicase C-terminal domain. In terms of domain architecture, UVR spans 656–691 (KALVKKLEKEMQQAASALDFEGAAQLRDMVLELRAM).

This sequence belongs to the UvrB family. As to quaternary structure, forms a heterotetramer with UvrA during the search for lesions. Interacts with UvrC in an incision complex.

The protein localises to the cytoplasm. The UvrABC repair system catalyzes the recognition and processing of DNA lesions. A damage recognition complex composed of 2 UvrA and 2 UvrB subunits scans DNA for abnormalities. Upon binding of the UvrA(2)B(2) complex to a putative damaged site, the DNA wraps around one UvrB monomer. DNA wrap is dependent on ATP binding by UvrB and probably causes local melting of the DNA helix, facilitating insertion of UvrB beta-hairpin between the DNA strands. Then UvrB probes one DNA strand for the presence of a lesion. If a lesion is found the UvrA subunits dissociate and the UvrB-DNA preincision complex is formed. This complex is subsequently bound by UvrC and the second UvrB is released. If no lesion is found, the DNA wraps around the other UvrB subunit that will check the other stand for damage. This Lactococcus lactis subsp. lactis (strain IL1403) (Streptococcus lactis) protein is UvrABC system protein B.